The primary structure comprises 279 residues: NAD kinase (279 aa).

Residue D57 is the Proton acceptor of the active site. NAD(+) is bound by residues D57 to G58, N133 to E134, R159, D161, T172 to S177, and A196.

The protein belongs to the NAD kinase family. A divalent metal cation serves as cofactor.

It is found in the cytoplasm. It carries out the reaction NAD(+) + ATP = ADP + NADP(+) + H(+). Its function is as follows. Involved in the regulation of the intracellular balance of NAD and NADP, and is a key enzyme in the biosynthesis of NADP. Catalyzes specifically the phosphorylation on 2'-hydroxyl of the adenosine moiety of NAD to yield NADP. The polypeptide is NAD kinase (Streptococcus thermophilus (strain CNRZ 1066)).